The following is a 1226-amino-acid chain: Probable DNA-binding protein SNT1 (1226 aa).

Disordered stretches follow at residues 1-219 (MGYP…YSRS) and 264-331 (LKST…PDNI). Residues 11-27 (GDKKRYHYSNNPNRRHP) are compositionally biased toward basic residues. A compositionally biased stretch (polar residues) spans 31–64 (YSKNSFPKSSNNGFVSSPTADNSTNPSVTPSTAS). 2 stretches are compositionally biased toward low complexity: residues 81-103 (PRPS…SSTR) and 116-131 (SSST…NTST). 2 stretches are compositionally biased toward polar residues: residues 132 to 143 (ITHTNTDIGNSR) and 150 to 170 (SRYN…SALS). Serine 187 carries the phosphoserine modification. Residues 202–211 (NNVSSVNNNS) are compositionally biased toward low complexity. The span at 264–275 (LKSTHSQSSPSL) shows a compositional bias: polar residues. The segment covering 280 to 304 (FHDANKLDKPEASVKVETPSKDETK) has biased composition (basic and acidic residues). Serine 395 is modified (phosphoserine). Positions 539 to 591 (DLQKKYEKECEILTKLSENLRKEEIENKRKEHELMEQKRREEGIETEKEKSLR) form a coiled coil. Residues 569 to 590 (EHELMEQKRREEGIETEKEKSL) show a composition bias toward basic and acidic residues. Residues 569–605 (EHELMEQKRREEGIETEKEKSLRHPSSSSSSRRRNRA) are disordered. The SANT domain occupies 668–720 (DASDNFTDHEHSLFLEGYLIHPKKFGKISHYMGGLRSPEECVLHYYRTKKTVN). Positions 732-745 (RKMSAAAKRRKRKE) are enriched in basic residues. The interval 732-796 (RKMSAAAKRR…SEVKGDPLGT (65 aa)) is disordered. Residues 748 to 758 (NDEEVEVDESK) are compositionally biased toward acidic residues. Residues 759–773 (EESTNTIEKEEKSEN) show a composition bias toward basic and acidic residues. Residue threonine 796 is modified to Phosphothreonine. One can recognise an HTH myb-type domain in the interval 884–938 (APEHKTSYWSVRESQLFPELLKEFGSQWSLISEKLGTKSTTMVRNYYQRNAARNG). The segment at residues 911–934 (WSLISEKLGTKSTTMVRNYYQRNA) is a DNA-binding region (H-T-H motif). A Phosphoserine modification is found at serine 1037. The tract at residues 1172–1194 (SQGTPTFPLPAPRTSPISRAPPK) is disordered.

As to quaternary structure, identified in a Set3C complex with SET3, HST1, HOS2, SIF2, CPR1 and HOS4.

The protein resides in the nucleus. Part of the Set3C complex, which is required to repress early/middle sporulation genes during meiosis. This is Probable DNA-binding protein SNT1 (SNT1) from Saccharomyces cerevisiae (strain ATCC 204508 / S288c) (Baker's yeast).